A 334-amino-acid polypeptide reads, in one-letter code: Beta-ketoacyl-[acyl-carrier-protein] synthase III (334 aa).

Active-site residues include cysteine 114 and histidine 260. The ACP-binding stretch occupies residues 261 to 265 (QANLR). Residue asparagine 290 is part of the active site.

The protein belongs to the thiolase-like superfamily. FabH family. As to quaternary structure, homodimer.

The protein resides in the cytoplasm. The catalysed reaction is malonyl-[ACP] + acetyl-CoA + H(+) = 3-oxobutanoyl-[ACP] + CO2 + CoA. The protein operates within lipid metabolism; fatty acid biosynthesis. Catalyzes the condensation reaction of fatty acid synthesis by the addition to an acyl acceptor of two carbons from malonyl-ACP. Catalyzes the first condensation reaction which initiates fatty acid synthesis and may therefore play a role in governing the total rate of fatty acid production. Possesses both acetoacetyl-ACP synthase and acetyl transacylase activities. Its substrate specificity determines the biosynthesis of branched-chain and/or straight-chain of fatty acids. In Clostridium tetani (strain Massachusetts / E88), this protein is Beta-ketoacyl-[acyl-carrier-protein] synthase III.